A 377-amino-acid chain; its full sequence is Spermidine/putrescine import ATP-binding protein PotA (377 aa).

The 231-residue stretch at 22–252 (VRLQNVTKRF…PANRFVADFI (231 aa)) folds into the ABC transporter domain. 54-61 (GPSGCGKT) provides a ligand contact to ATP.

This sequence belongs to the ABC transporter superfamily. Spermidine/putrescine importer (TC 3.A.1.11.1) family. The complex is composed of two ATP-binding proteins (PotA), two transmembrane proteins (PotB and PotC) and a solute-binding protein (PotD).

The protein localises to the cell membrane. The catalysed reaction is ATP + H2O + polyamine-[polyamine-binding protein]Side 1 = ADP + phosphate + polyamineSide 2 + [polyamine-binding protein]Side 1.. In terms of biological role, part of the ABC transporter complex PotABCD involved in spermidine/putrescine import. Responsible for energy coupling to the transport system. In Rubrobacter xylanophilus (strain DSM 9941 / JCM 11954 / NBRC 16129 / PRD-1), this protein is Spermidine/putrescine import ATP-binding protein PotA.